Here is a 545-residue protein sequence, read N- to C-terminus: uncharacterized protein (545 aa).

Disordered stretches follow at residues 1–162 (MSSG…DPQE) and 200–250 (YPPV…EPPP). Residues 86 to 100 (NYRSHSSADYLTPNS) show a composition bias toward polar residues. Low complexity-rich tracts occupy residues 109–128 (TTPRRLPLQPQQQAPATATK) and 141–152 (SGASTSSGTSST). Composition is skewed to polar residues over residues 212–221 (SSRTGTLQRT) and 228–244 (ISSTPQPQPTYADQMQS). The PDZ domain maps to 458 to 540 (RVLVEKMMPG…VTITLLPAVG (83 aa)).

This is an uncharacterized protein from Caenorhabditis elegans.